An 863-amino-acid chain; its full sequence is Axin-1 (863 aa).

Positions 1 to 81 (MNVQEQGFPL…PEGSASPTPP (81 aa)) are disordered. Residues 20–29 (APRPPVPGEE) carry the Tankyrase-binding motif motif. A compositionally biased stretch (polar residues) spans 34–61 (STDSRPVNHSFCSGKGTSIKSETSTATP). At S75 the chain carries Phosphoserine. Phosphoserine; by CK1 is present on S77. Positions 88 to 211 (SLHSLLDDQD…LKSDIYLEYT (124 aa)) constitute an RGS domain. The tract at residues 209–338 (EYTRTGSESP…DADTLSLTDS (130 aa)) is interaction with TP53. Disordered regions lie at residues 215–240 (SESP…YLPT), 249–268 (CDQD…SRLT), and 315–344 (ATSA…DGIP). A Phosphoserine modification is found at S217. Positions 249–258 (CDQDADEDDG) are enriched in acidic residues. Low complexity predominate over residues 325 to 339 (SLSSDADTLSLTDSS). Residues 348–432 (IRKQHRREMQ…EDGEMPSGPM (85 aa)) are interaction with GSK3B. Residues 353–411 (RREMQESIQVNGRVPLPHIPRTYRMPKEIRVEPQKFAEELIHRLEAVQRTREAEEKLEE) are interaction with SIAH1. Positions 433–501 (ASHKLPSVPA…SPDSGHVAKT (69 aa)) are interaction with beta-catenin. S468 is subject to Phosphoserine; by CK1. T480 is subject to Phosphothreonine; by GSK3-beta. S485 carries the phosphoserine; by GSK3-beta modification. S492 and S509 each carry phosphoserine. Residues 505-758 (GGTASGHGKH…PVLSVVPAVS (254 aa)) form an interaction with RNF111 region. The span at 529–542 (HHRHVHHHVHHNSA) shows a compositional bias: basic residues. Disordered stretches follow at residues 529 to 624 (HHRH…DAEK) and 642 to 664 (HRKA…SRPL). A compositionally biased stretch (basic and acidic residues) spans 543-554 (RPKEQMEAEVAR). The tract at residues 572–790 (PRSYSENAGT…CDSIVVAYYF (219 aa)) is interaction with PPP2CA. Polar residues predominate over residues 575-584 (YSENAGTTLS). The interaction with HIPK2 stretch occupies residues 678 to 753 (AQLRNSVQPS…RPACAPVLSV (76 aa)). The DIX domain maps to 781 to 863 (CDSIVVAYYF…KIIGKVEKVD (83 aa)). Glycyl lysine isopeptide (Lys-Gly) (interchain with G-Cter in SUMO) cross-links involve residues K858 and K861.

As to quaternary structure, homodimer. Component of the beta-catenin destruction complex, containing at least CTNNB1, an axin and GSK3B, that regulates CTNNB1 protein levels through phosphorylation and ubiquitination. Interacts with GSK3B; the interaction hyperphosphorylates CTNNB1 leading to its ubiquitination and destruction. Interacts with DAXX; the interaction stimulates the interaction of DAXX with TP53, stimulates 'Ser-46' phosphorylation of TP53 and induces cell death on UV irradiation. Also interacts with APC, RNF111, SMAD6 and SMAD7. Interacts (via the C-terminal) with PPP1CA; the interaction dephosphorylates AXIN1 and regulates interaction with GSK3B. Interacts with PPP2CA; the interaction dephosphorylates AXIN1. Interacts with MDFI; the interaction decreases AXIN1-mediated JUN N-terminal kinase (JNK) activation. Interacts with MDFIC; the interaction inhibits beta-cateninin-mediated signaling and AXIN1-mediated JUN N-terminal kinase (JNK) activation. Binds ANKRD6, PIAS1, PIAS2, PIAS4, SUMO1, MAP3K1 and MAP3K4. Component of the AXIN1-HIPK2-TP53 complex. Interacts directly in the complex with TP53 and HIPK2. Interacts with DIXDC1; the interaction prevents interaction with MAP3K1. Interacts with AIDA; the interaction blocks the AXIN1-mediated JNK activation through disrupting AXIN1 homodimerization and Wnt signaling. Interacts with LRP5 (via its phosphorylated PPPSP motifs); the interaction is stimulated by WNT1 and GSK3B and activates beta-catenin signaling. Interacts with CTNNB1 (via the armadillo repeats 2-7). Interacts with MACF1. Found in a complex composed of MACF1, APC, AXIN1, CTNNB1 and GSK3B. Interacts with TNKS. Interacts with DAB2; the interaction is mutually exclusive with the AXIN1:PPP1CA interaction. Interacts with ZBED3 (via PPPSP motif); the interaction is direct, enhanced by protein kinase GSK3B and casein kinase CSNK1E activities and decreases GSK3B-induced beta-catenin serine and threonine phosphorylations. Interacts with WDR26. Interacts with GID8. Interacts with SIAH1 and SIAH2; both probably catalyze AXIN1 ubiquitination and subsequent proteasome-mediated ubiquitin-dependent degradation. Interaction with GSK3B and AXIN1 is competitive. Phosphorylation and dephosphorylation of AXIN1 regulates assembly and function of the beta-catenin complex. Phosphorylated by CK1 and GSK3B. Dephosphorylated by PPP1CA and PPP2CA. Phosphorylation by CK1 enhances binding of GSK3B to AXIN1. Also phosphorylated by CDK2 which regulates interaction with CTNBB1. In terms of processing, ADP-ribosylated by tankyrase TNKS and TNKS2. Poly-ADP-ribosylated protein is recognized by RNF146, followed by ubiquitination and subsequent activation of the Wnt signaling pathway. Post-translationally, ubiquitinated by RNF146 when poly-ADP-ribosylated, leading to its degradation and subsequent activation of the Wnt signaling pathway. Deubiquitinated by USP34, deubiquitinated downstream of beta-catenin stabilization step: deubiquitination is important for nuclear accumulation during Wnt signaling to positively regulate beta-catenin (CTNBB1)-mediated transcription. Sumoylation at Lys-858 and Lys-861 prevents ubiquitination and degradation. Sumoylation is required for AXIN1-mediated JNK activation. Ubiquitination by SIAH1 and SIAH2 induces its proteasomal degradation as part of the activation of the Wnt signaling pathway. Expressed in embryonic stem cells.

The protein resides in the cytoplasm. It is found in the nucleus. The protein localises to the cell membrane. It localises to the membrane. In terms of biological role, component of the beta-catenin destruction complex required for regulating CTNNB1 levels through phosphorylation and ubiquitination, and modulating Wnt-signaling. Controls dorsoventral patterning via two opposing effects; down-regulates CTNNB1 to inhibit the Wnt signaling pathway and ventralize embryos, but also dorsalizes embryos by activating a Wnt-independent JNK signaling pathway. In Wnt signaling, probably facilitates the phosphorylation of CTNNB1 and APC by GSK3B. Likely to function as a tumor suppressor. Facilitates the phosphorylation of TP53 by HIPK2 upon ultraviolet irradiation. Enhances TGF-beta signaling by recruiting the RNF111 E3 ubiquitin ligase and promoting the degradation of inhibitory SMAD7. Also a component of the AXIN1-HIPK2-TP53 complex which controls cell growth, apoptosis and development. This chain is Axin-1 (Axin1), found in Mus musculus (Mouse).